A 292-amino-acid polypeptide reads, in one-letter code: MHKLIEKANTLMEALPYIRRFSGKTIVIKYGGHAMADEALKKSFAMDVILLKYIGINPVIVHGGGPQINETLKRYGIVSEFVKGMRVTDAATMGVVEMVLTGQVNKEVVGYINQHGGRAVGLSGKDGGLLLCRKLLQEVKKDDGTIEKVDIGFVGDITDVDSTILVTLEAGGFIPVIAPVGVGAGGESYNINADLVAGKVAAALKAEKLILLTDVPGVKDQEGHLLSSIALADVPALIDNGTITGGMIPKVTCCTDALTGGVHKAHIVDGRVEHAILLEIFTNVGIGTEILG.

Substrate contacts are provided by residues 64–65, Arg86, and Asn190; that span reads GG.

It belongs to the acetylglutamate kinase family. ArgB subfamily.

It localises to the cytoplasm. The catalysed reaction is N-acetyl-L-glutamate + ATP = N-acetyl-L-glutamyl 5-phosphate + ADP. It functions in the pathway amino-acid biosynthesis; L-arginine biosynthesis; N(2)-acetyl-L-ornithine from L-glutamate: step 2/4. Catalyzes the ATP-dependent phosphorylation of N-acetyl-L-glutamate. The sequence is that of Acetylglutamate kinase from Geotalea uraniireducens (strain Rf4) (Geobacter uraniireducens).